The sequence spans 455 residues: MYNCAILLAAGEGKRMKSATPKVLHKVCGKEMVNHVIDALREANIEDVNVIVGKKAKEVQLKTESRSVSFSFQEQQLGTGHAVKCAKEFLLGKEGNVAIFTGDAPLITSKTIKTLMEYHETNGFHGTILTSIIDNPSGYGRVLRENNGEVDKIIEHKDCLKEELKIKEINAGMYCFNIQALLEALDKLDNNNAQGEYYLTDVIEILKKDGKKVGALAVNFEETMGVNSRLQLAEVEAIMRKRINAMHLENGVTIIDPNNTYIDCNVVIHNDSIIYPGNILQGKTVIKENCVLYPNSRIVDSIIEKSVVIQNSVILQSNIGENTTVGPFAYIRPDSNIGSAVRIGDFVEIKKSTIGNNTKVSHLTYIGDAEVGERCNFGCGTVVVNYDGKEKHKTIVGDDVFIGCNANLVSPVEVKDNSYIAAGSTITDEVPRGALAIARSKQINKEDWVKKKDEK.

The segment at 1 to 229 (MYNCAILLAA…FEETMGVNSR (229 aa)) is pyrophosphorylase. UDP-N-acetyl-alpha-D-glucosamine is bound by residues 8-11 (LAAG), Lys22, Gln73, and 78-79 (GT). Asp103 is a binding site for Mg(2+). Residues Gly140, Glu155, Asn170, and Asn227 each contribute to the UDP-N-acetyl-alpha-D-glucosamine site. Residue Asn227 coordinates Mg(2+). The segment at 230 to 250 (LQLAEVEAIMRKRINAMHLEN) is linker. An N-acetyltransferase region spans residues 251–455 (GVTIIDPNNT…EDWVKKKDEK (205 aa)). Residues Arg332 and Lys350 each contribute to the UDP-N-acetyl-alpha-D-glucosamine site. The Proton acceptor role is filled by His362. UDP-N-acetyl-alpha-D-glucosamine-binding residues include Tyr365 and Asn376. Residues 385 to 386 (NY), Ala422, and Arg439 each bind acetyl-CoA.

The protein in the N-terminal section; belongs to the N-acetylglucosamine-1-phosphate uridyltransferase family. This sequence in the C-terminal section; belongs to the transferase hexapeptide repeat family. Homotrimer. The cofactor is Mg(2+).

Its subcellular location is the cytoplasm. It catalyses the reaction alpha-D-glucosamine 1-phosphate + acetyl-CoA = N-acetyl-alpha-D-glucosamine 1-phosphate + CoA + H(+). It carries out the reaction N-acetyl-alpha-D-glucosamine 1-phosphate + UTP + H(+) = UDP-N-acetyl-alpha-D-glucosamine + diphosphate. It functions in the pathway nucleotide-sugar biosynthesis; UDP-N-acetyl-alpha-D-glucosamine biosynthesis; N-acetyl-alpha-D-glucosamine 1-phosphate from alpha-D-glucosamine 6-phosphate (route II): step 2/2. Its pathway is nucleotide-sugar biosynthesis; UDP-N-acetyl-alpha-D-glucosamine biosynthesis; UDP-N-acetyl-alpha-D-glucosamine from N-acetyl-alpha-D-glucosamine 1-phosphate: step 1/1. It participates in bacterial outer membrane biogenesis; LPS lipid A biosynthesis. In terms of biological role, catalyzes the last two sequential reactions in the de novo biosynthetic pathway for UDP-N-acetylglucosamine (UDP-GlcNAc). The C-terminal domain catalyzes the transfer of acetyl group from acetyl coenzyme A to glucosamine-1-phosphate (GlcN-1-P) to produce N-acetylglucosamine-1-phosphate (GlcNAc-1-P), which is converted into UDP-GlcNAc by the transfer of uridine 5-monophosphate (from uridine 5-triphosphate), a reaction catalyzed by the N-terminal domain. In Clostridium tetani (strain Massachusetts / E88), this protein is Bifunctional protein GlmU.